The chain runs to 4061 residues: Hybrid PKS-NRPS synthetase tasS (4061 aa).

The Ketosynthase family 3 (KS3) domain maps to 7-472; sequence QEPIAVIGMA…GTNAHAIIEG (466 aa). Cysteine 180 is an active-site residue. A malonyl-CoA:ACP transacylase (MAT) domain region spans residues 586–911; sequence VFTGQGAQWP…RQKNDVEELL (326 aa). An N-terminal hotdog fold region spans residues 977-1113; that stretch reads HPLLGRRCVE…ATVNVTFHEP (137 aa). The segment at 977–1280 is dehydratase (DH) domain; sequence HPLLGRRCVE…VRVQPFSVAG (304 aa). Positions 977–1282 constitute a PKS/mFAS DH domain; the sequence is HPLLGRRCVE…VQPFSVAGPQ (306 aa). The active-site Proton acceptor; for dehydratase activity is the histidine 1010. A C-terminal hotdog fold region spans residues 1128–1282; that stretch reads LANAEPQRLY…VQPFSVAGPQ (155 aa). The active-site Proton donor; for dehydratase activity is aspartate 1188. The methyltransferase (MT) domain stretch occupies residues 1425 to 1619; it reads LDRFYEEGFE…GFNGVETHTP (195 aa). The tract at residues 2153–2325 is ketoreductase (KR) domain; that stretch reads TYFLLGLSGE…GVVGSDMAIG (173 aa). Positions 2437 to 2516 constitute a Carrier 1 domain; the sequence is EAIKVVFDTF…LLVEEAVDKL (80 aa). The residue at position 2475 (serine 2475) is an O-(pantetheine 4'-phosphoryl)serine. The interval 2527-2617 is disordered; it reads EHGGEPDLTQ…QKHQEQTSQS (91 aa). Low complexity predominate over residues 2556–2576; the sequence is TSAASSSDTGSDSSPTSNSVS. The segment covering 2577–2592 has biased composition (polar residues); that stretch reads ETQTGTPLETPMSTTE. The condensation (C) domain stretch occupies residues 2632 to 3077; sequence QMTFGQNRFW…ELATWDTESE (446 aa). The adenylation (A) (KR) domain stretch occupies residues 3103-3510; the sequence is QVIADHPDAV…RGYLTVEGRI (408 aa). Residues 3633-3712 enclose the Carrier 2 domain; it reads QNLTATERTL…SMAALLDDGV (80 aa). Serine 3672 is modified (O-(pantetheine 4'-phosphoryl)serine). Positions 3813-3969 are reductase (RED) domain; sequence DIDVVLHCAA…LSPLEDAVEA (157 aa).

The protein in the C-terminal section; belongs to the NRP synthetase family.

It catalyses the reaction (2S,4S)-4-hydroxy-4-methylglutamate + 8 malonyl-CoA + 3 S-adenosyl-L-methionine + ATP + 8 NADPH + 11 H(+) = (2S)-3-[(2S)-3,5-dioxo-4-[(2E,4R,6R,8E,10E,12E)-4,6,12-trimethyltetradeca-2,8,10,12-tetraenoyl]pyrrolidin-2-yl]-2-hydroxy-2-methylpropanoate + AMP + 3 S-adenosyl-L-homocysteine + 8 CO2 + diphosphate + 8 NADP(+) + 8 CoA + 6 H2O. It participates in secondary metabolite biosynthesis. Functionally, hybrid PKS-NRPS synthetase; part of the gene cluster that mediates the biosynthesis of the tetramic acids Sch210971 and Sch210972, potential anti-HIV fungal natural product that contain a decalin core. The PKS module of tasS together with the enoylreductase tasC catalyze the formation of the polyketide unit which is then conjugated to 4-hydroxyl-4-methyl glutamate (HMG) by the condensation domain of the tasS NRPS module. One unique structural feature of Sch210971 and Sch210972 is the tetramic acid motif proposed to be derived from the non-proteinogenic amino acid HMG, by a Dieckmann-type condensation catalyzed by the reductase domain of tasS. The aldolase tasA catalyzes the aldol condensation of 2 molecules of pyruvic acid to yield the intermediate 4-hydroxyl-4-methyl-2-oxoglutarate (HMOG), which can then be stereoselectively transaminated, may be by tasG, to form HMG. The Diels-Alderase tas3 then uses the Dieckmann product of tasS as substrate and catalyzes the Diels-Alder cycloaddition to form the decalin ring of Sch210971 and Sch210972. This chain is Hybrid PKS-NRPS synthetase tasS, found in Hapsidospora irregularis.